A 427-amino-acid polypeptide reads, in one-letter code: 3-phosphoshikimate 1-carboxyvinyltransferase (427 aa).

3-phosphoshikimate contacts are provided by Lys20, Ser21, and Arg25. Lys20 contributes to the phosphoenolpyruvate binding site. The phosphoenolpyruvate site is built by Gly92 and Arg120. The 3-phosphoshikimate site is built by Ser166, Gln168, Asp312, and Lys339. Residue Gln168 coordinates phosphoenolpyruvate. Catalysis depends on Asp312, which acts as the Proton acceptor. Residues Arg343 and Arg385 each contribute to the phosphoenolpyruvate site.

The protein belongs to the EPSP synthase family. As to quaternary structure, monomer.

Its subcellular location is the cytoplasm. It catalyses the reaction 3-phosphoshikimate + phosphoenolpyruvate = 5-O-(1-carboxyvinyl)-3-phosphoshikimate + phosphate. It functions in the pathway metabolic intermediate biosynthesis; chorismate biosynthesis; chorismate from D-erythrose 4-phosphate and phosphoenolpyruvate: step 6/7. In terms of biological role, catalyzes the transfer of the enolpyruvyl moiety of phosphoenolpyruvate (PEP) to the 5-hydroxyl of shikimate-3-phosphate (S3P) to produce enolpyruvyl shikimate-3-phosphate and inorganic phosphate. In Streptococcus gordonii (strain Challis / ATCC 35105 / BCRC 15272 / CH1 / DL1 / V288), this protein is 3-phosphoshikimate 1-carboxyvinyltransferase.